A 596-amino-acid polypeptide reads, in one-letter code: Sphingomyelinase C 1 (596 aa).

An N-terminal signal peptide occupies residues 1 to 36; the sequence is MITKRNIPCKKNWKYKKKSISLTLITICYMFLFLTS. The interval 63 to 118 is disordered; sequence KIEDSTNTDPSSNVNEEDENSINANANDNAPSDSDSSNPRSPDKNPVNPTSPNSSS. The segment covering 67–76 has biased composition (polar residues); the sequence is STNTDPSSNV. The span at 83 to 118 shows a compositional bias: low complexity; that stretch reads SINANANDNAPSDSDSSNPRSPDKNPVNPTSPNSSS.

The protein resides in the secreted. The enzyme catalyses a sphingomyelin + H2O = phosphocholine + an N-acylsphing-4-enine + H(+). The chain is Sphingomyelinase C 1 (sph1) from Leptospira interrogans serogroup Icterohaemorrhagiae serovar copenhageni (strain Fiocruz L1-130).